The sequence spans 453 residues: MAQRYDEMVHYPGLDGMPLAGFGDAHTGRALQHHSLSQSAPYGSTGAAHRVPMPPGMGSNDGLKREKDEIYGHPLFPLLALVFEKCELATCSPRDNSGSFPGGDVCSSDSFNEDIAVFAKQVRTEKPLFSSNPELDSLMIQAIQVLRFHLLELEKVHDLCDNFCHRYITCLKGKMPIDLVIDDRDGSSKSDLEDFTGSCTSLSDQNNSWIRDHDETGSTHSGTPGPSSGGLASQSGDNSSEQGDCMDNSVASPSTGDDDDLDRDKKRNKKRGIFPKVATNIMRAWLFQHLSHPYPSEEQKKQLAQDTGLTILQVNNWFINARRRIVQPMIDQSNRTGQGGAPYSPDGQNMGGYVMDGQQHMGIRPPGFQGIPGDYTAAPSTMPMGFPPAGYTPAIPPHSAGLRHGPSLHSYLPGHPHHASMILPAGASPHHLVSAQSPADALLNGQNIDIHAH.

The disordered stretch occupies residues 33 to 64 (HHSLSQSAPYGSTGAAHRVPMPPGMGSNDGLK). Residues 102–185 (GGDVCSSDSF…PIDLVIDDRD (84 aa)) enclose the MEIS N-terminal domain. Residues 192-272 (LEDFTGSCTS…RDKKRNKKRG (81 aa)) are disordered. Positions 197-209 (GSCTSLSDQNNSW) are enriched in polar residues. Residues 218-230 (STHSGTPGPSSGG) show a composition bias toward low complexity. Over residues 231 to 242 (LASQSGDNSSEQ) the composition is skewed to polar residues. A DNA-binding region (homeobox) is located at residues 267–329 (RNKKRGIFPK…NARRRIVQPM (63 aa)).

It belongs to the TALE/MEIS homeobox family.

It is found in the nucleus. Its function is as follows. A caudalizing protein which is required to pattern the anterior/posterior (A/P) axis during central nervous system (CNS) formation. Inhibits anterior neural expression and acts as a transcriptional activator to induce posterior neural gene expression. Maintains a proper A/P balance required for hindbrain formation by activating the FGF/MAPK pathway, which modulates the planar cell polarity (PCP) pathway. Interacts with retinoid signaling during hindbrain patterning. In Xenopus tropicalis (Western clawed frog), this protein is Homeobox protein meis3.